Reading from the N-terminus, the 198-residue chain is Chorion protein S19 (198 aa).

The signal sequence occupies residues 1 to 16 (MNKFATLAVFISVCLA).

The protein belongs to the chorion protein S19 family.

The protein localises to the secreted. Its function is as follows. Chorion membrane (egg shell) protein; plays a role in protecting the egg from the environment. The polypeptide is Chorion protein S19 (Cp19) (Drosophila virilis (Fruit fly)).